The sequence spans 310 residues: Glutaminase (310 aa).

Substrate contacts are provided by S66, N117, E161, N168, Y192, Y244, and V262.

The protein belongs to the glutaminase family. Homotetramer.

The enzyme catalyses L-glutamine + H2O = L-glutamate + NH4(+). This chain is Glutaminase, found in Shigella boydii serotype 4 (strain Sb227).